The primary structure comprises 283 residues: NADPH-dependent 3-dehydrocapnine reductase (283 aa).

Tyr153 serves as the catalytic Proton acceptor.

Belongs to the short-chain dehydrogenases/reductases (SDR) family.

It carries out the reaction 3-oxocapnine + NADPH + H(+) = capnine + NADP(+). It participates in lipid metabolism. Functionally, reductase involved in the biosynthesis of capnine, a sulfonolipid present in the outer membrane of gliding Bacteroidetes and essential for gliding motility. Catalyzes the reduction of 3-dehydrocapnine to capnine. The polypeptide is NADPH-dependent 3-dehydrocapnine reductase (Ornithobacterium rhinotracheale).